The following is a 207-amino-acid chain: Ribosome maturation factor RimP (207 aa).

It belongs to the RimP family.

It is found in the cytoplasm. In terms of biological role, required for maturation of 30S ribosomal subunits. This chain is Ribosome maturation factor RimP, found in Parvibaculum lavamentivorans (strain DS-1 / DSM 13023 / NCIMB 13966).